Consider the following 281-residue polypeptide: Acetyl-coenzyme A carboxylase carboxyl transferase subunit beta (281 aa).

Residues Gly-24–Asn-281 form the CoA carboxyltransferase N-terminal domain.

Belongs to the AccD/PCCB family. In terms of assembly, acetyl-CoA carboxylase is a heterohexamer composed of biotin carboxyl carrier protein (AccB), biotin carboxylase (AccC) and two subunits each of ACCase subunit alpha (AccA) and ACCase subunit beta (AccD).

Its subcellular location is the cytoplasm. The catalysed reaction is N(6)-carboxybiotinyl-L-lysyl-[protein] + acetyl-CoA = N(6)-biotinyl-L-lysyl-[protein] + malonyl-CoA. Its pathway is lipid metabolism; malonyl-CoA biosynthesis; malonyl-CoA from acetyl-CoA: step 1/1. Component of the acetyl coenzyme A carboxylase (ACC) complex. Biotin carboxylase (BC) catalyzes the carboxylation of biotin on its carrier protein (BCCP) and then the CO(2) group is transferred by the transcarboxylase to acetyl-CoA to form malonyl-CoA. The protein is Acetyl-coenzyme A carboxylase carboxyl transferase subunit beta of Amoebophilus asiaticus (strain 5a2).